The sequence spans 397 residues: Ribosomal RNA large subunit methyltransferase I (397 aa).

Residues 2-79 (TAAIYLVKGR…KEEINKAFFV (78 aa)) form the PUA domain.

It belongs to the methyltransferase superfamily. RlmI family.

Its subcellular location is the cytoplasm. It catalyses the reaction cytidine(1962) in 23S rRNA + S-adenosyl-L-methionine = 5-methylcytidine(1962) in 23S rRNA + S-adenosyl-L-homocysteine + H(+). In terms of biological role, specifically methylates the cytosine at position 1962 (m5C1962) of 23S rRNA. The chain is Ribosomal RNA large subunit methyltransferase I from Vibrio campbellii (strain ATCC BAA-1116).